We begin with the raw amino-acid sequence, 60 residues long: Cytotoxin 1 (60 aa).

Disulfide bonds link cysteine 3–cysteine 21, cysteine 14–cysteine 38, cysteine 42–cysteine 53, and cysteine 54–cysteine 59.

This sequence belongs to the three-finger toxin family. Short-chain subfamily. Type IA cytotoxin sub-subfamily. In terms of assembly, monomer in solution; Homodimer and oligomer in the presence of negatively charged lipids forming a pore with a size ranging between 20 and 30 Angstroms. Expressed by the venom gland.

The protein resides in the secreted. The protein localises to the target cell membrane. In terms of biological role, shows cytolytic activity on many different cells by forming pore in lipid membranes. In vivo, increases heart rate or kills the animal by cardiac arrest. In addition, it binds to heparin with high affinity, interacts with Kv channel-interacting protein 1 (KCNIP1) in a calcium-independent manner, and binds to integrin alpha-V/beta-3 (ITGAV/ITGB3) with moderate affinity. This is Cytotoxin 1 from Naja melanoleuca (Forest cobra).